The following is a 199-amino-acid chain: Holliday junction branch migration complex subunit RuvA (199 aa).

Residues 1–64 (MIALLTGKLA…EDAINLYGFR (64 aa)) form a domain I region. Residues 65–143 (TQQEKELFQL…KLGLAQPQAG (79 aa)) are domain II. The interval 144–148 (GATAP) is flexible linker. The segment at 149-199 (AKQEIRDDVLSALINLGYKEAVVQKALAELKVTEDATVELVLKQALKILMK) is domain III.

Belongs to the RuvA family. As to quaternary structure, homotetramer. Forms an RuvA(8)-RuvB(12)-Holliday junction (HJ) complex. HJ DNA is sandwiched between 2 RuvA tetramers; dsDNA enters through RuvA and exits via RuvB. An RuvB hexamer assembles on each DNA strand where it exits the tetramer. Each RuvB hexamer is contacted by two RuvA subunits (via domain III) on 2 adjacent RuvB subunits; this complex drives branch migration. In the full resolvosome a probable DNA-RuvA(4)-RuvB(12)-RuvC(2) complex forms which resolves the HJ.

It localises to the cytoplasm. Functionally, the RuvA-RuvB-RuvC complex processes Holliday junction (HJ) DNA during genetic recombination and DNA repair, while the RuvA-RuvB complex plays an important role in the rescue of blocked DNA replication forks via replication fork reversal (RFR). RuvA specifically binds to HJ cruciform DNA, conferring on it an open structure. The RuvB hexamer acts as an ATP-dependent pump, pulling dsDNA into and through the RuvAB complex. HJ branch migration allows RuvC to scan DNA until it finds its consensus sequence, where it cleaves and resolves the cruciform DNA. This Geobacter sp. (strain M21) protein is Holliday junction branch migration complex subunit RuvA.